A 2281-amino-acid polypeptide reads, in one-letter code: Protein Ycf2 (2281 aa).

ATP is bound at residue 1635-1642 (GSIGSGRS).

The protein belongs to the Ycf2 family.

It is found in the plastid. The protein localises to the chloroplast stroma. Its function is as follows. Probable ATPase of unknown function. Its presence in a non-photosynthetic plant (Epifagus virginiana) and experiments in tobacco indicate that it has an essential function which is probably not related to photosynthesis. This Coffea arabica (Arabian coffee) protein is Protein Ycf2.